Here is a 705-residue protein sequence, read N- to C-terminus: Glycogen [starch] synthase isoform 2 (705 aa).

R20 contacts UDP. Residue S159 is modified to Phosphoserine. The UDP-alpha-D-glucose site is built by H193 and R199. Alpha-D-glucose 6-phosphate is bound by residues H280, E281, Q283, H286, and K290. R320 serves as a coordination point for UDP. Residue R320 coordinates UDP-alpha-D-glucose. A phosphoserine mark is found at S363 and S467. H500 is an alpha-D-glucose 6-phosphate binding site. Residues E509, W511, and G512 each coordinate UDP-alpha-D-glucose. UDP is bound at residue T514. Residues R583 and R587 each contribute to the alpha-D-glucose 6-phosphate site. S651 carries the post-translational modification Phosphoserine. A Phosphoserine; by PHO85 modification is found at S655. Phosphoserine; by PKA is present on residues S661 and S663. The residue at position 668 (T668) is a Phosphothreonine; by PHO85. Positions 686 to 705 (SLGVNPAADDDDDGPYADDS) are disordered. Acidic residues predominate over residues 693–705 (ADDDDDGPYADDS).

Belongs to the glycosyltransferase 3 family. In terms of assembly, interacts with PCL10. In terms of processing, phosphorylated by the cyclin-CDK PCL10-PHO85. Phosphorylation causes inactivation of enzyme.

The protein resides in the cytoplasm. The protein localises to the cytosol. The enzyme catalyses [(1-&gt;4)-alpha-D-glucosyl](n) + UDP-alpha-D-glucose = [(1-&gt;4)-alpha-D-glucosyl](n+1) + UDP + H(+). The protein operates within glycan biosynthesis; glycogen biosynthesis. Its activity is regulated as follows. Allosteric activation by glucose-6-phosphate, and phosphorylation by a cAMP-dependent kinase. Its function is as follows. Glycogen synthase participates in the glycogen biosynthetic process along with glycogenin and glycogen branching enzyme. Extends the primer composed of a few glucose units formed by glycogenin by adding new glucose units to it. In this context, glycogen synthase transfers the glycosyl residue from UDP-Glc to the non-reducing end of alpha-1,4-glucan. This Saccharomyces cerevisiae (strain ATCC 204508 / S288c) (Baker's yeast) protein is Glycogen [starch] synthase isoform 2 (GSY2).